A 121-amino-acid chain; its full sequence is MATEIPPAVRNDLDRLRQLEDQLQAVLLRKQQYEGELRNVDKALNELNKLPQDSKVYKVVGTFLLSTTRDEAIQDLNQRKELLDLHLQSLVKQENMLRKQISELENKVKQVLAAGQGGQVQ.

Belongs to the prefoldin subunit beta family. As to quaternary structure, heterohexamer of two alpha and four beta subunits.

It localises to the cytoplasm. Functionally, molecular chaperone capable of stabilizing a range of proteins. Seems to fulfill an ATP-independent, HSP70-like function in archaeal de novo protein folding. This chain is Prefoldin subunit beta, found in Caldivirga maquilingensis (strain ATCC 700844 / DSM 13496 / JCM 10307 / IC-167).